Consider the following 1129-residue polypeptide: SMC5-SMC6 complex localization factor protein 2 (1129 aa).

Disordered stretches follow at residues 71–178 (VKAR…SILN), 312–343 (NTSSSSHYKESVTGRSSPHQHDLSSTSFTEQA), and 955–1057 (MLYD…QLEG). Positions 72–87 (KARRHTLPHSSHRRSP) are enriched in basic residues. Residues 93 to 110 (LLFQQRPRNSSGQFTHNP) show a composition bias toward polar residues. Basic and acidic residues-rich tracts occupy residues 112 to 130 (QKKDRMDNRDHKTSIKKEL) and 149 to 166 (RKSEASTGSERETKRPRV). Composition is skewed to polar residues over residues 169–178 (QATSSSSILN) and 324–343 (TGRSSPHQHDLSSTSFTEQA). Composition is skewed to acidic residues over residues 999–1014 (ESEEDDQSKDEEEEDW) and 1033–1048 (SAEDCVEDVSDAEEES).

Belongs to the FAM178 family.

It is found in the nucleus. In terms of biological role, plays a role in the DNA damage response (DDR) pathway by regulating postreplication repair of UV-damaged DNA and genomic stability maintenance. Promotes the recruitment of the SMC5-SMC6 complex to DNA lesions. The protein is SMC5-SMC6 complex localization factor protein 2 (slf2) of Danio rerio (Zebrafish).